We begin with the raw amino-acid sequence, 365 residues long: Aminomethyltransferase (365 aa).

This sequence belongs to the GcvT family. As to quaternary structure, the glycine cleavage system is composed of four proteins: P, T, L and H.

It catalyses the reaction N(6)-[(R)-S(8)-aminomethyldihydrolipoyl]-L-lysyl-[protein] + (6S)-5,6,7,8-tetrahydrofolate = N(6)-[(R)-dihydrolipoyl]-L-lysyl-[protein] + (6R)-5,10-methylene-5,6,7,8-tetrahydrofolate + NH4(+). Its function is as follows. The glycine cleavage system catalyzes the degradation of glycine. The sequence is that of Aminomethyltransferase from Synechococcus sp. (strain CC9902).